The following is a 793-amino-acid chain: Serine/threonine-protein phosphatase BSU1 (793 aa).

Kelch repeat units lie at residues 53 to 109, 110 to 160, 214 to 262, 264 to 314, and 329 to 388; these read STTA…LYGT, LILI…IAAQ, IFLL…VFGG, KLHV…NQYQ, and HLYV…EASS. Phosphoserine is present on residues serine 395 and serine 444. Mn(2+) is bound by residues aspartate 510, histidine 512, aspartate 544, and asparagine 576. Histidine 577 (proton donor) is an active-site residue. 2 residues coordinate Mn(2+): histidine 629 and histidine 707. Serine 764 is subject to Phosphoserine.

The protein belongs to the PPP phosphatase family. BSU subfamily. Interacts with CDG1, CDL1 and ASK7/BIN2. Mn(2+) is required as a cofactor. Post-translationally, phosphorylated at Ser-395 and Ser-444. Phosphorylated at Ser-764 by CDG1 and CDL1. Mainly expressed in young, elongating tissues. In young seedlings, it is expressed at the base of the hypocotyl, at the tip and most peripheral cell layers of cotyledons, and in the vascular cylinder of roots, particularly in the elongation zone and at the point of emergence of lateral roots. In mature plants, it is still present in the root vasculature, but almost completely absent in fully expanded stems and leaves. In flowers, it is mainly expressed in sepal veins, anther filaments, and in the style, suggesting that BSU1 is expressed in actively growing regions and apparently enriched in vascular tissues.

The protein localises to the nucleus. The enzyme catalyses O-phospho-L-seryl-[protein] + H2O = L-seryl-[protein] + phosphate. The catalysed reaction is O-phospho-L-threonyl-[protein] + H2O = L-threonyl-[protein] + phosphate. Its activity is regulated as follows. Activated by phosphorylation at Ser-764 by CDG1. Phosphatase that acts as a positive regulator of brassinosteroid (BR) signaling. Dephosphorylates BES1, a transcription factor that regulates the expression of BR-response genes, thereby playing an important role in the regulation of response to BRs. Inactivates the negative regulator of BR signaling ASK7/BIN2 by dephosphorylation at 'Tyr-200'. This is Serine/threonine-protein phosphatase BSU1 (BSU1) from Arabidopsis thaliana (Mouse-ear cress).